Reading from the N-terminus, the 663-residue chain is RING finger protein 145 (663 aa).

The next 14 membrane-spanning stretches (helical) occupy residues 53 to 73 (YLAL…LTLP), 77 to 97 (LVQL…HQIS), 123 to 143 (FTTA…VMKT), 146 to 166 (IWLF…VPLE), 168 to 188 (IVII…YFLG), 205 to 222 (LVQV…MSLW), 225 to 245 (LVVP…QIYS), 275 to 295 (YSLL…LTLC), 316 to 336 (TEGV…LQVV), 340 to 360 (FLLS…MLEI), 384 to 404 (SLCL…CQFF), 410 to 430 (LLII…TLFI), 460 to 480 (LLEF…TIFG), and 482 to 502 (WTVM…WLRA). Positions 81–84 (YLYF) match the YLYF motif motif. Cysteine 537 is a catalytic residue. The RING-type; atypical zinc finger occupies 537 to 575 (CAICYQDMKSAVITPCSHFFHAGCLKKWLYVQDTCPLCH). A disordered region spans residues 587–663 (LGTEAAPQPP…EGEVCPVESA (77 aa)). Residues 619–628 (GTGTQEGSGD) show a composition bias toward polar residues.

Interacts (via YLYF motif) with INSIG1 and INSIG2.

It is found in the endoplasmic reticulum membrane. It catalyses the reaction S-ubiquitinyl-[E2 ubiquitin-conjugating enzyme]-L-cysteine + [acceptor protein]-L-lysine = [E2 ubiquitin-conjugating enzyme]-L-cysteine + N(6)-ubiquitinyl-[acceptor protein]-L-lysine.. In terms of biological role, E3 ubiquitin ligase that catalyzes the direct transfer of ubiquitin from E2 ubiquitin-conjugating enzyme to a specific substrate. In response to bacterial infection, negatively regulates the phagocyte oxidative burst by controlling the turnover of the NADPH oxidase complex subunits. Promotes monoubiquitination of CYBA and 'Lys-48'-linked polyubiquitination and degradation of CYBB NADPH oxidase catalytic subunits, both essential for the generation of antimicrobial reactive oxygen species. Involved in the maintenance of cholesterol homeostasis. In response to high sterol concentrations ubiquitinates HMGCR, a rate-limiting enzyme in cholesterol biosynthesis, and targets it for degradation. The interaction with INSIG1 is required for this function. In addition, triggers ubiquitination of SCAP, likely inhibiting its transport to the Golgi apparatus and the subsequent processing/maturation of SREBPF2, ultimately down-regulating cholesterol biosynthesis. This chain is RING finger protein 145, found in Mus musculus (Mouse).